The chain runs to 460 residues: Armadillo repeat-containing protein LFR (460 aa).

Residues 1 to 10 show a composition bias toward low complexity; sequence MSHVRSAPAG. Residues 1–32 are disordered; the sequence is MSHVRSAPAGKSGGGGGSTPAKRGRPFGSTTG. ARM repeat units follow at residues 225–267, 321–360, and 364–405; these read ENET…NLAP, NEPF…NVAE, and DFRL…SLVS.

As to quaternary structure, interacts with CHR719, SWI3A and SWI3C. As to expression, expressed at low levels in coleoptiles, leaf tongues, mature leaves and nodes during the vegetative phase. Highly expressed in reproductive tissues such as young panicles, early developing seeds, embryos and endosperms.

It localises to the nucleus. In terms of biological role, plays critical roles in both embryo and endosperm development. Required for free nuclei division and cellularization in early endosperm development, by preventing premature cell death in the endosperm. Involved in the regulation of pattern formation and organ differentiation during embryogenesis, by regulating genes involved in the early stages of seed development. This chain is Armadillo repeat-containing protein LFR, found in Oryza sativa subsp. japonica (Rice).